We begin with the raw amino-acid sequence, 81 residues long: Small ribosomal subunit protein bS16 (81 aa).

It belongs to the bacterial ribosomal protein bS16 family.

The protein is Small ribosomal subunit protein bS16 of Treponema denticola (strain ATCC 35405 / DSM 14222 / CIP 103919 / JCM 8153 / KCTC 15104).